The primary structure comprises 488 residues: ATP-dependent RNA helicase dbp3 (488 aa).

Residues 1-29 are compositionally biased toward basic and acidic residues; it reads MAKREHQDQTGDSRPSKKSKGTKDTKKNT. Positions 1-42 are disordered; the sequence is MAKREHQDQTGDSRPSKKSKGTKDTKKNTEVSPPYFQSPALD. The Q motif signature appears at 92–100; that stretch reads GFASPTAIQ. In terms of domain architecture, Helicase ATP-binding spans 104-279; that stretch reads WPLLFAGRDV…STFMTSPVTV (176 aa). ATP is bound at residue 117–124; that stretch reads AETGSGKT. Residues 226 to 229 carry the DEAD box motif; that stretch reads DEAD. Residues 306–457 enclose the Helicase C-terminal domain; the sequence is EKEQRLVQIL…EVPEALLKFG (152 aa).

It belongs to the DEAD box helicase family. DDX5/DBP2 subfamily.

The protein resides in the nucleus. The protein localises to the nucleolus. It carries out the reaction ATP + H2O = ADP + phosphate + H(+). Its function is as follows. ATP-dependent RNA helicase required for 60S ribosomal subunit synthesis. Involved in efficient pre-rRNA processing, predominantly at site A3, which is necessary for the normal formation of 25S and 5.8S rRNAs. This Emericella nidulans (strain FGSC A4 / ATCC 38163 / CBS 112.46 / NRRL 194 / M139) (Aspergillus nidulans) protein is ATP-dependent RNA helicase dbp3 (dbp3).